The primary structure comprises 183 residues: Capsid protein (183 aa).

The segment at 136–183 (NAPILSTLPETTVVRRRGRSPRRRTPSPRRRRSESPRRRRSQSRESQC) is disordered. Over residues 149-176 (VRRRGRSPRRRTPSPRRRRSESPRRRRS) the composition is skewed to basic residues. Phosphoserine; by host occurs at positions 155, 162, and 170. The stretch at 155–160 (SPRRRT) is one 1; half-length repeat. Residues 155–176 (SPRRRTPSPRRRRSESPRRRRS) form a 3 X 7 AA repeats of S-P-R-R-R-[PR]-S region. The Bipartite nuclear localization signal motif lies at 158 to 175 (RRTPSPRRRRSESPRRRR). 2 tandem repeats follow at residues 162-168 (SPRRRRS) and 170-176 (SPRRRRS). Residues 177–183 (QSRESQC) are RNA binding.

It belongs to the orthohepadnavirus core antigen family. Homodimerizes, then multimerizes. Interacts with cytosol exposed regions of viral L glycoprotein present in the reticulum-to-Golgi compartment. Interacts with human FLNB. Phosphorylated form interacts with host importin alpha; this interaction depends on the exposure of the NLS, which itself depends upon genome maturation and/or phosphorylation of the capsid protein. Interacts with host NUP153. Post-translationally, phosphorylated by host SRPK1, SRPK2, and maybe protein kinase C or GAPDH. Phosphorylation is critical for pregenomic RNA packaging. Protein kinase C phosphorylation is stimulated by HBx protein and may play a role in transport of the viral genome to the nucleus at the late step during the viral replication cycle.

It is found in the virion. Its subcellular location is the host cytoplasm. In terms of biological role, self assembles to form an icosahedral capsid. Most capsids appear to be large particles with an icosahedral symmetry of T=4 and consist of 240 copies of capsid protein, though a fraction forms smaller T=3 particles consisting of 180 capsid proteins. Entering capsids are transported along microtubules to the nucleus. Phosphorylation of the capsid is thought to induce exposure of nuclear localization signal in the C-terminal portion of the capsid protein that allows binding to the nuclear pore complex via the importin (karyopherin-) alpha and beta. Capsids are imported in intact form through the nuclear pore into the nuclear basket, where it probably binds NUP153. Only capsids that contain the mature viral genome can release the viral DNA and capsid protein into the nucleoplasm. Immature capsids get stuck in the basket. Capsids encapsulate the pre-genomic RNA and the P protein. Pre-genomic RNA is reverse-transcribed into DNA while the capsid is still in the cytoplasm. The capsid can then either be directed to the nucleus, providing more genomes for transcription, or bud through the endoplasmic reticulum to provide new virions. This is Capsid protein from Homo sapiens (Human).